A 307-amino-acid polypeptide reads, in one-letter code: Dioxygenase swnH1 (307 aa).

Histidine 149, aspartate 151, and histidine 227 together coordinate Fe cation.

The protein belongs to the PhyH family. Homodimer. Requires Fe cation as cofactor.

It functions in the pathway mycotoxin biosynthesis. Its function is as follows. Dioxygenase; part of the gene cluster that mediates the biosynthesis of swainsonine (SW), a cytotoxic fungal alkaloid and a potential cancer therapy drug. Swainsonine production occurs via a multibranched pathway and is dispensable for fungal colonization of plants and infection of insect hosts. The first step of swainsonine biosynthesis is the production of the precursor pipecolic acid (PA) via conversion of L-lysine (Lys) to 1-piperideine-6-carboxylate (P6C) by the aminotransferase swnA, the latter being further reduced to PA by the reductase swnR. PA can be converted from lysine by both the SW biosynthetic cluster and the unclustered genes such as lysine cyclodeaminase. The PKS-NRPS hybrid synthetase swnK uptakes and condensates PA and malonyl-CoA with and without skipping of the ketoreductase (KR) domain in order to produce 3 intermediates, 1-oxoindolizidine, (1S)-1-hydroxyindolizin, and (1R)-1-hydroxyindolizine; with the transisomer (1S)-1-hydroxyindolizin being predominant. The terminal thioester reductase (TE) domain of swnK is involved in reduction of the thioester bond to release the intermediate aldehydes. The oxidoreductase swnN could contribute to the reduction of 1-oxoindolizidine to (1S)-1-hydroxyindolizin and (1R)-1-hydroxyindolizine, contributing to the major route of SW production. The dioxygenase swnH2 would be responsible for the oxidization of (1R)-1-hydroxyindolizine into (1R,2S)-1,2-dihydroxyindolizine and of (1S)-1-hydroxyindolizin to yield both (1R,2S)-1,2-dihydroxyindolizine and (1S,2S)-1,2-dihydroxyindolizine. The dioxygenase swnH1 then performs the conversion of the 1,2-dihydroxyindolizine epimers to SW. This chain is Dioxygenase swnH1, found in Metarhizium robertsii (strain ARSEF 23 / ATCC MYA-3075) (Metarhizium anisopliae (strain ARSEF 23)).